Here is a 321-residue protein sequence, read N- to C-terminus: MRFFVLGAGSWGTVFAQILHENGEEVVLWARRKEIVDLINVSHTSPYVEESKITVRATNDLEEIKKEDILVIAIPVQYIREHLLRLPVKPSMVLNLSKGIEIKTGKRVSEIVEEILGCPYAVLSGPSHAEEVAKKLPTAVTLAGENSKELQKRISTEYFRVYTCEDVVGVEIAGALKNVIAIAAGILDGFGGWDNAKAALETRGIYEIARFGMFFGADQKTFMGLAGIGDLMVTCNSRYSRNRRFGELIARGFNPLKLLESSNQVVEGAFTVKAVMKIAKENKIDMPISEEVYRVVYEGKPPLQSMRDLMRRSLKDEFWAS.

Positions 10, 11, 31, 32, 47, and 98 each coordinate NADPH. 3 residues coordinate sn-glycerol 3-phosphate: lysine 98, glycine 125, and serine 127. Alanine 129 contributes to the NADPH binding site. Sn-glycerol 3-phosphate-binding residues include lysine 177, aspartate 230, serine 240, arginine 241, and asparagine 242. The Proton acceptor role is filled by lysine 177. Arginine 241 contacts NADPH. Positions 265 and 267 each coordinate NADPH.

It belongs to the NAD-dependent glycerol-3-phosphate dehydrogenase family.

It is found in the cytoplasm. The enzyme catalyses sn-glycerol 3-phosphate + NAD(+) = dihydroxyacetone phosphate + NADH + H(+). The catalysed reaction is sn-glycerol 3-phosphate + NADP(+) = dihydroxyacetone phosphate + NADPH + H(+). The protein operates within membrane lipid metabolism; glycerophospholipid metabolism. Catalyzes the reduction of the glycolytic intermediate dihydroxyacetone phosphate (DHAP) to sn-glycerol 3-phosphate (G3P), the key precursor for phospholipid synthesis. The protein is Glycerol-3-phosphate dehydrogenase [NAD(P)+] of Thermotoga sp. (strain RQ2).